Consider the following 215-residue polypeptide: CASP-like protein 1U3 (215 aa).

Residues 1–13 (MHDEEKKEPKWVT) are Cytoplasmic-facing. A helical membrane pass occupies residues 14-34 (AVSIAGRIAGMGLAVAAAVLM). Residues 35-68 (STASQCTVYYAAPAASAYGGAARARTVTYSDFPP) are Extracellular-facing. A helical membrane pass occupies residues 69–89 (FVFLVGAASIAAFLEAIAIFL). Residues 90 to 105 (VVWKKGKDKTTKVLMP) are Cytoplasmic-facing. A helical transmembrane segment spans residues 106-126 (LLGVAVPALLYSATGAAFAAV). Residues 127–161 (SDMSYCSANGKRVSICAGSAAAGGGVSGGTNFCSQ) are Extracellular-facing. Residues 162 to 182 (VHIAVYLSLAAAVAVSVAEVV) traverse the membrane as a helical segment. Residues 183–215 (RGLGGSASGGGSDSDSSSSSESGGCDHGCHHKH) are Cytoplasmic-facing. The tract at residues 187-215 (GSASGGGSDSDSSSSSESGGCDHGCHHKH) is disordered. Residues 195-205 (DSDSSSSSESG) show a composition bias toward low complexity.

This sequence belongs to the Casparian strip membrane proteins (CASP) family. As to quaternary structure, homodimer and heterodimers.

The protein localises to the cell membrane. The polypeptide is CASP-like protein 1U3 (Sorghum bicolor (Sorghum)).